Reading from the N-terminus, the 93-residue chain is Large ribosomal subunit protein uL23cz/uL23cy (93 aa).

The protein belongs to the universal ribosomal protein uL23 family. Part of the 50S ribosomal subunit.

The protein localises to the plastid. It is found in the chloroplast. Functionally, binds to 23S rRNA. The protein is Large ribosomal subunit protein uL23cz/uL23cy (rpl23-A) of Oenothera elata subsp. hookeri (Hooker's evening primrose).